Here is a 164-residue protein sequence, read N- to C-terminus: Transcription factor E (164 aa).

Residues 5–87 form the HTH TFE/IIEalpha-type domain; that stretch reads NDKVIRGYLL…LWRLDFSDIE (83 aa).

This sequence belongs to the TFE family. As to quaternary structure, monomer. Interaction with RNA polymerase subunits RpoF and RpoE is necessary for Tfe stimulatory transcription activity. Able to interact with Tbp and RNA polymerase in the absence of DNA promoter. Interacts both with the preinitiation and elongation complexes.

Its function is as follows. Transcription factor that plays a role in the activation of archaeal genes transcribed by RNA polymerase. Facilitates transcription initiation by enhancing TATA-box recognition by TATA-box-binding protein (Tbp), and transcription factor B (Tfb) and RNA polymerase recruitment. Not absolutely required for transcription in vitro, but particularly important in cases where Tbp or Tfb function is not optimal. It dynamically alters the nucleic acid-binding properties of RNA polymerases by stabilizing the initiation complex and destabilizing elongation complexes. Seems to translocate with the RNA polymerase following initiation and acts by binding to the non template strand of the transcription bubble in elongation complexes. This is Transcription factor E from Methanosarcina barkeri (strain Fusaro / DSM 804).